An 81-amino-acid chain; its full sequence is Large ribosomal subunit protein bL27 (81 aa).

Positions 1–11 (MATSKSGGSSK) are enriched in polar residues. Residues 1–26 (MATSKSGGSSKNGRDSISKRLGVKRS) form a disordered region.

Belongs to the bacterial ribosomal protein bL27 family.

This Borrelia turicatae (strain 91E135) protein is Large ribosomal subunit protein bL27.